A 178-amino-acid polypeptide reads, in one-letter code: uncharacterized protein (178 aa).

A run of 4 helical transmembrane segments spans residues 29–49, 76–96, 105–125, and 139–159; these read AATG…AYLF, VISI…YFLL, PGIL…NPIF, and IITT…SISF.

It is found in the cell membrane. This is an uncharacterized protein from Bacillus subtilis (strain 168).